A 71-amino-acid chain; its full sequence is Small ribosomal subunit protein bS21 (71 aa).

It belongs to the bacterial ribosomal protein bS21 family.

In Buchnera aphidicola subsp. Baizongia pistaciae (strain Bp), this protein is Small ribosomal subunit protein bS21.